The sequence spans 378 residues: Cytochrome b (378 aa).

The next 4 membrane-spanning stretches (helical) occupy residues 34–54, 78–99, 114–134, and 179–199; these read FGSL…FLAM, WFLR…FIHV, WNTG…GYVL, and FFTF…IHLL. Residues H84 and H98 each contribute to the heme b site. Residues H183 and H197 each contribute to the heme b site. H202 is an a ubiquinone binding site. The next 4 membrane-spanning stretches (helical) occupy residues 227–247, 289–309, 321–341, and 348–368; these read YKDI…IWKF, LGGV…PFTH, LNQI…WIGA, and YILT…INPL.

Belongs to the cytochrome b family. In terms of assembly, the main subunits of complex b-c1 are: cytochrome b, cytochrome c1 and the Rieske protein. The cofactor is heme b.

It localises to the mitochondrion inner membrane. Functionally, component of the ubiquinol-cytochrome c reductase complex (complex III or cytochrome b-c1 complex) that is part of the mitochondrial respiratory chain. The b-c1 complex mediates electron transfer from ubiquinol to cytochrome c. Contributes to the generation of a proton gradient across the mitochondrial membrane that is then used for ATP synthesis. The protein is Cytochrome b (mt:Cyt-b) of Anopheles gambiae (African malaria mosquito).